The primary structure comprises 360 residues: Photosystem II protein D1 (360 aa).

3 helical membrane-spanning segments follow: residues 29 to 46 (YIGWFGVLMIPTLLTATS), 118 to 133 (HFLLGVASYMGREWEL), and 142 to 156 (WIFVAFSAPVAAASA). His118 is a chlorophyll a binding site. Tyr126 provides a ligand contact to pheophytin a. The [CaMn4O5] cluster site is built by Asp170 and Glu189. A helical transmembrane segment spans residues 197–218 (FHMAGVAGVFGGSLFSAMHGSL). His198 lines the chlorophyll a pocket. A quinone-binding positions include His215 and 264–265 (SF). His215 contacts Fe cation. Position 272 (His272) interacts with Fe cation. A helical membrane pass occupies residues 274 to 288 (FLAAWPVVGIWLTAL). Positions 332, 333, 342, and 344 each coordinate [CaMn4O5] cluster. A propeptide spanning residues 345-360 (SNEVLPVAVNAPAVNG) is cleaved from the precursor.

It belongs to the reaction center PufL/M/PsbA/D family. PSII is composed of 1 copy each of membrane proteins PsbA, PsbB, PsbC, PsbD, PsbE, PsbF, PsbH, PsbI, PsbJ, PsbK, PsbL, PsbM, PsbT, PsbX, PsbY, PsbZ, Psb30/Ycf12, at least 3 peripheral proteins of the oxygen-evolving complex and a large number of cofactors. It forms dimeric complexes. The D1/D2 heterodimer binds P680, chlorophylls that are the primary electron donor of PSII, and subsequent electron acceptors. It shares a non-heme iron and each subunit binds pheophytin, quinone, additional chlorophylls, carotenoids and lipids. D1 provides most of the ligands for the Mn4-Ca-O5 cluster of the oxygen-evolving complex (OEC). There is also a Cl(-1) ion associated with D1 and D2, which is required for oxygen evolution. The PSII complex binds additional chlorophylls, carotenoids and specific lipids. is required as a cofactor. Tyr-161 forms a radical intermediate that is referred to as redox-active TyrZ, YZ or Y-Z. In terms of processing, C-terminally processed by CTPA; processing is essential to allow assembly of the oxygen-evolving complex and thus photosynthetic growth.

Its subcellular location is the plastid. It localises to the chloroplast thylakoid membrane. The enzyme catalyses 2 a plastoquinone + 4 hnu + 2 H2O = 2 a plastoquinol + O2. In terms of biological role, photosystem II (PSII) is a light-driven water:plastoquinone oxidoreductase that uses light energy to abstract electrons from H(2)O, generating O(2) and a proton gradient subsequently used for ATP formation. It consists of a core antenna complex that captures photons, and an electron transfer chain that converts photonic excitation into a charge separation. The D1/D2 (PsbA/PsbD) reaction center heterodimer binds P680, the primary electron donor of PSII as well as several subsequent electron acceptors. The protein is Photosystem II protein D1 of Heterosigma akashiwo (Chromophytic alga).